The following is a 51-amino-acid chain: MAHFKPLGKKLRLAKALKQNRSVPIWVIIKTNRRFRDHPKRRHWRRTKLKA.

It belongs to the eukaryotic ribosomal protein eL39 family.

The polypeptide is Large ribosomal subunit protein eL39 (Hyperthermus butylicus (strain DSM 5456 / JCM 9403 / PLM1-5)).